The primary structure comprises 347 residues: Isocitrate dehydrogenase [NAD] subunit alpha, mitochondrial (347 aa).

A mitochondrion-targeting transit peptide spans 1–8; sequence QKQVTRGF. Position 14-42 (14-42) interacts with NAD(+); sequence TVTLIPGDGIGPEISAAVMKIFDAAKAPI. At lysine 58 the chain carries N6-succinyllysine. A Phosphothreonine modification is found at threonine 82. Positions 96, 106, and 127 each coordinate substrate. Lysine 204 carries the post-translational modification N6-acetyllysine. 3 residues coordinate Mg(2+): aspartate 214, aspartate 238, and aspartate 242. Lysine 324 bears the N6-acetyllysine; alternate mark. Lysine 324 carries the N6-succinyllysine; alternate modification. Residue lysine 331 is modified to N6-succinyllysine.

This sequence belongs to the isocitrate and isopropylmalate dehydrogenases family. In terms of assembly, heterooligomer of subunits alpha (IDH3A), beta (IDH3B), and gamma (IDH3G) in the apparent ratio of 2:1:1. The heterodimer containing one IDH3A and one IDH3B subunit and the heterodimer containing one IDH3A and one IDH3G subunit assemble into a heterotetramer (which contains two subunits of IDH3A, one of IDH3B and one of IDH3G) and further into the heterooctamer. Mg(2+) is required as a cofactor. It depends on Mn(2+) as a cofactor.

Its subcellular location is the mitochondrion. It catalyses the reaction D-threo-isocitrate + NAD(+) = 2-oxoglutarate + CO2 + NADH. Its activity is regulated as follows. The heterotetramer and the heterodimer composed of IDH3A and IDH3G subunits can be allosterically activated by citrate (CIT) or/and ADP, and the two activators can act independently or synergistically. The heterodimer composed of IDH3A and IDH3B subunits cannot be allosterically regulated and the allosteric regulation of the heterotetramer is through the IDH3G subunit and not the IDH3B subunit. The IDH3G subunit contains the allosteric site which consists of a CIT-binding site and an ADP-binding site, and the binding of CIT and ADP causes conformational changes at the allosteric site which are transmitted to the active site in the catalytic subunit (IDH3A) through a cascade of conformational changes at the heterodimer interface, leading to stabilization of the isocitrate-binding at the active site and thus activation of the enzyme. ATP can activate the heterotetramer and the heterodimer composed of IDH3A and IDH3G subunits at low concentrations but inhibits their activities at high concentrations, whereas ATP exhibits only inhibitory effect on the heterodimer composed of IDH3A and IDH3B subunits. Catalytic subunit of the enzyme which catalyzes the decarboxylation of isocitrate (ICT) into alpha-ketoglutarate. The heterodimer composed of the alpha (IDH3A) and beta (IDH3B) subunits and the heterodimer composed of the alpha (IDH3A) and gamma (IDH3G) subunits, have considerable basal activity but the full activity of the heterotetramer (containing two subunits of IDH3A, one of IDH3B and one of IDH3G) requires the assembly and cooperative function of both heterodimers. The protein is Isocitrate dehydrogenase [NAD] subunit alpha, mitochondrial (IDH3A) of Macaca fascicularis (Crab-eating macaque).